Consider the following 355-residue polypeptide: tRNA pseudouridine synthase D (355 aa).

Residue Asp84 is the Nucleophile of the active site. The TRUD domain occupies 160 to 306 (GVPNYFGLQR…MAHERRILRL (147 aa)).

This sequence belongs to the pseudouridine synthase TruD family.

It catalyses the reaction uridine(13) in tRNA = pseudouridine(13) in tRNA. Functionally, responsible for synthesis of pseudouridine from uracil-13 in transfer RNAs. This chain is tRNA pseudouridine synthase D, found in Pseudomonas aeruginosa (strain LESB58).